Consider the following 727-residue polypeptide: E3 SUMO-protein ligase pli1 (727 aa).

The SAP domain occupies 18–52; it reads ETGLIIPQLKDILRVFGLRLSGTKAELITRIKQLI. Positions 108-261 constitute a PINIT domain; it reads YSRPFAPVVH…SVVVCFVKVY (154 aa). Residues 290–371 form an SP-RING-type zinc finger; that stretch reads QDADIIATST…MQHILESTPS (82 aa). Zn(2+) contacts are provided by C321, H323, C344, and C347. 2 positions are modified to phosphoserine: S395 and S396. Disordered regions lie at residues 408–558 and 706–727; these read ELSD…TQHS and QSNNSYHNSGFEGTGNTFQSID. Polar residues-rich tracts occupy residues 417–435 and 459–494; these read TMANKSNDQPTRRASTHNS and VATSTTESPSNATKENSLSRNVQSPNIDTAISNRST. Over residues 546–558 the composition is skewed to low complexity; sequence SQQNNNNSNTQHS.

Belongs to the PIAS family. As to quaternary structure, interacts with hus5/ubc9.

It localises to the nucleus. Its pathway is protein modification; protein sumoylation. In terms of biological role, acts as an E3 ligase mediating SUMO/Smt3 attachment to other proteins. Involved in the maintenance of the centromere and in telomere length. Regulates recombination, via extension sumoylation, particularly within the heterochromatin repeats. The chain is E3 SUMO-protein ligase pli1 (pli1) from Schizosaccharomyces pombe (strain 972 / ATCC 24843) (Fission yeast).